A 493-amino-acid polypeptide reads, in one-letter code: Probable cytosol aminopeptidase (493 aa).

Positions 260 and 265 each coordinate Mn(2+). The active site involves Lys-272. 3 residues coordinate Mn(2+): Asp-283, Asp-342, and Glu-344. The active site involves Arg-346.

This sequence belongs to the peptidase M17 family. It depends on Mn(2+) as a cofactor.

It is found in the cytoplasm. It catalyses the reaction Release of an N-terminal amino acid, Xaa-|-Yaa-, in which Xaa is preferably Leu, but may be other amino acids including Pro although not Arg or Lys, and Yaa may be Pro. Amino acid amides and methyl esters are also readily hydrolyzed, but rates on arylamides are exceedingly low.. The catalysed reaction is Release of an N-terminal amino acid, preferentially leucine, but not glutamic or aspartic acids.. Its function is as follows. Presumably involved in the processing and regular turnover of intracellular proteins. Catalyzes the removal of unsubstituted N-terminal amino acids from various peptides. This chain is Probable cytosol aminopeptidase, found in Clostridium perfringens (strain 13 / Type A).